The following is a 228-amino-acid chain: NAD(P)H-hydrate epimerase (228 aa).

Positions 9 to 209 (VRAVERLAHR…LLGLTPAFLA (201 aa)) constitute a YjeF N-terminal domain. Position 53-57 (53-57 (NNGGD)) interacts with (6S)-NADPHX. 2 residues coordinate K(+): N54 and D115. Residues 119–125 (GIGLARP) and D148 contribute to the (6S)-NADPHX site. Residue S151 coordinates K(+).

The protein belongs to the NnrE/AIBP family. K(+) serves as cofactor.

It catalyses the reaction (6R)-NADHX = (6S)-NADHX. The enzyme catalyses (6R)-NADPHX = (6S)-NADPHX. In terms of biological role, catalyzes the epimerization of the S- and R-forms of NAD(P)HX, a damaged form of NAD(P)H that is a result of enzymatic or heat-dependent hydration. This is a prerequisite for the S-specific NAD(P)H-hydrate dehydratase to allow the repair of both epimers of NAD(P)HX. This is NAD(P)H-hydrate epimerase from Bordetella bronchiseptica (strain ATCC BAA-588 / NCTC 13252 / RB50) (Alcaligenes bronchisepticus).